The sequence spans 420 residues: Nucleobindin-2 (420 aa).

A signal peptide spans 1–24; sequence MRWRIIQVQYCFLLVPCMLTALEA. Residues 171 to 223 mediate DNA binding; that stretch reads RTRHEEFKKYEMMKEHERREYLKTLSEEKRKEEESKFEEMKRKHEDHPKVNHP. Residues 193 to 225 form a disordered region; that stretch reads KTLSEEKRKEEESKFEEMKRKHEDHPKVNHPGS. The binds to necdin stretch occupies residues 213 to 420; sequence KHEDHPKVNH…AGELKFEPHT (208 aa). EF-hand domains lie at 241–276 and 293–328; these read PNDF…ELEK and ERLR…KEFL. Ca(2+) contacts are provided by Asp-254, Asn-256, Asp-258, Glu-265, Asp-306, Asn-308, Asp-310, and Glu-317. A GBA motif is present at residues 304 to 334; the sequence is EIDNNKDRLVTLEEFLRATEKKEFLEPDSWE. A Phosphoserine modification is found at Ser-332. Residues 365–389 are compositionally biased toward basic and acidic residues; the sequence is AEELQKQKEDLQRQHDHLEAQKQEY. Residues 365–420 are disordered; that stretch reads AEELQKQKEDLQRQHDHLEAQKQEYHQAVQHLEQKKLQQGIAPSGPAGELKFEPHT.

Belongs to the nucleobindin family. In terms of assembly, interacts (via GBA motif) with guanine nucleotide-binding protein G(i) alpha subunit GNAI3. Preferentially interacts with inactive rather than active GNAI3. Interaction with GNAI3 is inhibited when NUCB2 binds calcium, probably due to a conformational change which renders the GBA motif inaccessible. Binds to the postmitotic growth suppressor NDN; coexpression abolishes NUCB2 secretion. Interacts with MC4R. In terms of tissue distribution, found in liver, heart, thymus, muscle, intestine, kidney, lung, spleen and throughout the brain, in cerebral cortex, hippocampus, hypothalamus and medulla oblongata. Nucb2 and necdin levels were higher in postmitotic neurons.

It localises to the cytoplasm. The protein localises to the perikaryon. It is found in the endoplasmic reticulum. The protein resides in the golgi apparatus. Its subcellular location is the nucleus envelope. It localises to the membrane. The protein localises to the secreted. Functionally, calcium-binding protein which may have a role in calcium homeostasis. Acts as a non-receptor guanine nucleotide exchange factor which binds to and activates guanine nucleotide-binding protein (G-protein) alpha subunit GNAI3. Its function is as follows. Anorexigenic peptide, seems to play an important role in hypothalamic pathways regulating food intake and energy homeostasis, acting in a leptin-independent manner. May also exert hypertensive roles and modulate blood pressure through directly acting on peripheral arterial resistance. In intestinal epithelial cells, plays a role in the inhibition of hepatic glucose production via MC4R receptor leading to increased cyclic adenosine monophosphate (cAMP) levels and glucagon-like peptide 1 (GLP-1) secretion. The sequence is that of Nucleobindin-2 (Nucb2) from Mus musculus (Mouse).